Here is a 47-residue protein sequence, read N- to C-terminus: PhoP/PhoQ regulator MgrB (47 aa).

Residues 6 to 26 form a helical membrane-spanning segment; it reads WVILIIVALVCLLLWAQVFNI.

The protein belongs to the MgrB family. In terms of assembly, may form homooligomers. Probably interacts with the periplasmic domain of PhoQ.

It is found in the cell inner membrane. Functionally, phoP-regulated transcription is redox-sensitive, being activated when the periplasm becomes more reducing. MgrB acts between DsbA/DsbB and PhoP/PhoQ in this pathway. Represses PhoP/PhoQ signaling, possibly by binding to the periplasmic domain of PhoQ, altering its activity and that of downstream effector PhoP. This is PhoP/PhoQ regulator MgrB from Citrobacter koseri (strain ATCC BAA-895 / CDC 4225-83 / SGSC4696).